We begin with the raw amino-acid sequence, 361 residues long: Alcohol dehydrogenase 9 (361 aa).

The Zn(2+) site is built by Cys51, Thr53, His73, Cys104, Cys107, Cys110, Cys118, and Cys167. An alcohol-binding residues include Thr53 and His73. Thr53 contacts NAD(+). Residues 192-197 (GLGGLG), Lys221, 278-280 (LGA), and Lys356 each bind NAD(+).

It belongs to the zinc-containing alcohol dehydrogenase family. Class-III subfamily. Homodimer. Zn(2+) is required as a cofactor.

This is Alcohol dehydrogenase 9 from Catharanthus roseus (Madagascar periwinkle).